We begin with the raw amino-acid sequence, 201 residues long: Probable GTP-binding protein EngB (201 aa).

One can recognise an EngB-type G domain in the interval 25-199; it reads HGIEIAFIGY…KSKLNFWYEK (175 aa). Residues 33–40, 60–64, 78–81, 145–148, and 178–180 each bind GTP; these read GYSNSGKS, GRTQL, DLPG, TKCD, and FSS. The Mg(2+) site is built by serine 40 and threonine 62.

This sequence belongs to the TRAFAC class TrmE-Era-EngA-EngB-Septin-like GTPase superfamily. EngB GTPase family. Mg(2+) is required as a cofactor.

Its function is as follows. Necessary for normal cell division and for the maintenance of normal septation. The sequence is that of Probable GTP-binding protein EngB from Buchnera aphidicola subsp. Schizaphis graminum (strain Sg).